The chain runs to 151 residues: Flagellar assembly factor FliW (151 aa).

Belongs to the FliW family. In terms of assembly, interacts with translational regulator CsrA and flagellin(s).

It localises to the cytoplasm. Its function is as follows. Acts as an anti-CsrA protein, binds CsrA and prevents it from repressing translation of its target genes, one of which is flagellin. Binds to flagellin and participates in the assembly of the flagellum. This Halalkalibacterium halodurans (strain ATCC BAA-125 / DSM 18197 / FERM 7344 / JCM 9153 / C-125) (Bacillus halodurans) protein is Flagellar assembly factor FliW.